A 210-amino-acid polypeptide reads, in one-letter code: 2-hydroxy-3-keto-5-methylthiopentenyl-1-phosphate phosphatase (210 aa).

It belongs to the HAD-like hydrolase superfamily. MtnX family.

The enzyme catalyses 2-hydroxy-5-methylsulfanyl-3-oxopent-1-enyl phosphate + H2O = 1,2-dihydroxy-5-(methylsulfanyl)pent-1-en-3-one + phosphate. It participates in amino-acid biosynthesis; L-methionine biosynthesis via salvage pathway; L-methionine from S-methyl-5-thio-alpha-D-ribose 1-phosphate: step 4/6. Dephosphorylates 2-hydroxy-3-keto-5-methylthiopentenyl-1-phosphate (HK-MTPenyl-1-P) yielding 1,2-dihydroxy-3-keto-5-methylthiopentene (DHK-MTPene). In Microcystis aeruginosa, this protein is 2-hydroxy-3-keto-5-methylthiopentenyl-1-phosphate phosphatase.